We begin with the raw amino-acid sequence, 55 residues long: Large ribosomal subunit protein bL33 (55 aa).

The segment covering 1-11 has biased composition (basic and acidic residues); sequence MAKGARDKIKL. Residues 1–24 form a disordered region; it reads MAKGARDKIKLESTAGTGHFYTTT. Residues 14–24 show a composition bias toward polar residues; it reads TAGTGHFYTTT.

The protein belongs to the bacterial ribosomal protein bL33 family.

This is Large ribosomal subunit protein bL33 from Burkholderia multivorans (strain ATCC 17616 / 249).